Here is a 335-residue protein sequence, read N- to C-terminus: MTIRVGINGFGRIGRNYFRALLEQGADIEIVAVNDLGDTATTAHLLKYDTILGRLKAEVTHTADTITVDGKTIKVFSERNPADIPWGELNVDIVIESTGIFTKKADAEKHIAGGAKKVLISAPASDEDITIVLGVNEDKYDPAKHNVISNASCTTNCVAPMAKVLDENFGIVKGLMTTIHAYTNDQRILDFPHKDLRRARAAAENIIPTTTGAAKATALVLPQLKGKMDGISMRVPVPTGSATDLVVEVSREVTKDEVNAAFKKAAEGELQGYLSYTEDPIVSSDIVGDPSSCTFDSAMTMVMEGTSVKILGWYDNEWGYSNRLVDLTVFVGNQL.

NAD(+) contacts are provided by residues 12–13 (RI), aspartate 35, arginine 79, and serine 121. Residues 152-154 (SCT) and threonine 183 contribute to the D-glyceraldehyde 3-phosphate site. Residue cysteine 153 is the Nucleophile of the active site. Asparagine 184 contributes to the NAD(+) binding site. Residues arginine 198, 211–212 (TG), and arginine 234 contribute to the D-glyceraldehyde 3-phosphate site. NAD(+) is bound at residue asparagine 316.

The protein belongs to the glyceraldehyde-3-phosphate dehydrogenase family. Homotetramer.

It is found in the cytoplasm. It carries out the reaction D-glyceraldehyde 3-phosphate + phosphate + NAD(+) = (2R)-3-phospho-glyceroyl phosphate + NADH + H(+). Its pathway is carbohydrate degradation; glycolysis; pyruvate from D-glyceraldehyde 3-phosphate: step 1/5. Its activity is regulated as follows. Inhibited by pentalenolactone. Functionally, catalyzes the oxidative phosphorylation of glyceraldehyde 3-phosphate (G3P) to 1,3-bisphosphoglycerate (BPG) using the cofactor NAD. The first reaction step involves the formation of a hemiacetal intermediate between G3P and a cysteine residue, and this hemiacetal intermediate is then oxidized to a thioester, with concomitant reduction of NAD to NADH. The reduced NADH is then exchanged with the second NAD, and the thioester is attacked by a nucleophilic inorganic phosphate to produce BPG. This Streptomyces avermitilis (strain ATCC 31267 / DSM 46492 / JCM 5070 / NBRC 14893 / NCIMB 12804 / NRRL 8165 / MA-4680) protein is Glyceraldehyde-3-phosphate dehydrogenase 2 (gap2).